Consider the following 284-residue polypeptide: Putative ribosome biogenesis protein C306.07c (284 aa).

The tract at residues 264-284 (LKKSELRAQKRGSSGEGKGNK) is disordered.

It belongs to the universal ribosomal protein uL1 family. Highly divergent. As to quaternary structure, component of the 90S pre-ribosomes.

Its subcellular location is the nucleus. It localises to the nucleolus. Involved in rRNA-processing and ribosome biosynthesis. This is Putative ribosome biogenesis protein C306.07c from Schizosaccharomyces pombe (strain 972 / ATCC 24843) (Fission yeast).